The chain runs to 560 residues: MNNNIINLIAAIILSLSIIFGWQYFVVKPEQKKQQQQIAVQKAENLKKQQLKALVEPATGIVVQEESQVQRIKIESESLTGSISLKGLRFDDLILKKYKQDLSKNSPEVRLFSPANTENAYFAEVGLVSNLSSVKLPNNDTIWNSDSEILSPEKPVHLFWVNEDGVKFLVTITVDENYLFTIEQTIVNNSDKELPVQSYGLINRKYIAVEKAVNILHQGPIGCIDENLKEYSYDDIKDKKSEKFAASKVDWIGITDKYWLSSLIPDKSSNYSSNFNYALKQGTERYQVDFISPVQIIKPGENFSIKSRIFAGAKKVDLLDKYEKQYDIKLFDRAIDFGWFYIITKPVFYAMNFFYGYVGNFGVSILIVTVIIKLLMFTLANKSYRSMKKMKNLQPEIDRIKNLYSDDKARLNQEIMALYKKEKVNPVAGCLPILVQIPVFFSIYKVLYVTIEMRQAPFYGWIKDLSASDPTTIFNLFGLLPFSPPSFLMIGAWPILMAITMFLQQKMSPEPADPMQAQVMKFMPLIFLFMFSSFPVGLLIYWSWNNILSIIQQYYINKFN.

6 consecutive transmembrane segments (helical) span residues 5 to 25 (IINLIAAIILSLSIIFGWQYF), 334 to 354 (AIDFGWFYIITKPVFYAMNFF), 357 to 377 (YVGNFGVSILIVTVIIKLLMF), 431 to 451 (LPILVQIPVFFSIYKVLYVTI), 476 to 496 (LFGLLPFSPPSFLMIGAWPIL), and 522 to 542 (FMPLIFLFMFSSFPVGLLIYW).

It belongs to the OXA1/ALB3/YidC family. Type 1 subfamily. In terms of assembly, interacts with the Sec translocase complex via SecD. Specifically interacts with transmembrane segments of nascent integral membrane proteins during membrane integration.

It localises to the cell inner membrane. Functionally, required for the insertion and/or proper folding and/or complex formation of integral membrane proteins into the membrane. Involved in integration of membrane proteins that insert both dependently and independently of the Sec translocase complex, as well as at least some lipoproteins. Aids folding of multispanning membrane proteins. This chain is Membrane protein insertase YidC, found in Rickettsia conorii (strain ATCC VR-613 / Malish 7).